Consider the following 58-residue polypeptide: Small ribosomal subunit protein bS21 (58 aa).

Residues 25-58 (KAGTLQEARKREHYEKPSVKRKRKSEAARKRKKI) are disordered. The segment covering 31–42 (EARKREHYEKPS) has biased composition (basic and acidic residues). Residues 43-58 (VKRKRKSEAARKRKKI) are compositionally biased toward basic residues.

Belongs to the bacterial ribosomal protein bS21 family.

This Streptococcus thermophilus (strain ATCC BAA-491 / LMD-9) protein is Small ribosomal subunit protein bS21.